The chain runs to 687 residues: Leucine-rich repeat and fibronectin type III domain-containing protein 1-like protein (687 aa).

The signal sequence occupies residues 1–17 (MEWLIFSLLLLAVSASG). Residues 18–51 (QLCPKRCMCQNLSPSLAILCAKTGLLFVPTVIDR) enclose the LRRNT domain. Over 18 to 527 (QLCPKRCMCQ…LRSHFLGGTM (510 aa)) the chain is Extracellular. 7 LRR repeats span residues 52-73 (RTVELRLTENFITAVKRRDFAN), 76-97 (SLLHLTLSRNTISQIMPYTFAD), 100-121 (RLRALHLDSNRLSVITDDHFRG), 124-145 (NLRHLILANNQLHNISPHAFDD), 149-170 (TLEDLDLSYNNLVDIPWDTIGR), 173-194 (NVNTLNMDHNLIEHVPLGIFSN), and 197-218 (KLARLDMTSNKLKKIPPDPLFL). Asn-73 is a glycosylation site (N-linked (GlcNAc...) asparagine). The LRRCT domain maps to 241–287 (NPLHCNCELLWLRRLTREDDLETCASPPDLTAKYFWTIPEEEFICDP). Positions 287-376 (PPVITRKSPK…STGTVELVVS (90 aa)) constitute an Ig-like domain. Cys-309 and Cys-358 are joined by a disulfide. Residues Asn-331, Asn-340, Asn-346, Asn-383, Asn-410, and Asn-450 are each glycosylated (N-linked (GlcNAc...) asparagine). The segment at 384 to 412 (STNRIREPDPGPSDILTSAKSTSSVSNET) is disordered. The segment covering 398 to 412 (ILTSAKSTSSVSNET) has biased composition (polar residues). A Fibronectin type-III domain is found at 415-510 (QERKVVLAEL…VGCVTFVTET (96 aa)). The chain crosses the membrane as a helical span at residues 528–548 (IIIIGGIIVASVLVFIIILMI). Residues 549-687 (RYKVYSQHGA…AQRDWSDFKI (139 aa)) lie on the Cytoplasmic side of the membrane. 2 disordered regions span residues 563–601 (GTAMTNVRSQTNGGQAAGQVPRSSSKIVEGQEASGGSLG) and 630–687 (EDIV…DFKI). 2 stretches are compositionally biased toward polar residues: residues 565–576 (AMTNVRSQTNGG) and 657–672 (EGTSSDTQEDTASPQV). The segment covering 673-687 (SDEKKAQRDWSDFKI) has biased composition (basic and acidic residues).

This sequence belongs to the LRFN family.

The protein localises to the membrane. Its subcellular location is the synapse. Its function is as follows. May be involved in the regulation of excitatory synapses. The protein is Leucine-rich repeat and fibronectin type III domain-containing protein 1-like protein (lrfn1l) of Danio rerio (Zebrafish).